We begin with the raw amino-acid sequence, 163 residues long: C-type lectin lectoxin-Lio2 (163 aa).

A signal peptide spans 1 to 21 (MERFIFAALLVVALSLSGTGA). 3 disulfides stabilise this stretch: cysteine 25-cysteine 36, cysteine 53-cysteine 152, and cysteine 127-cysteine 144. The 122-residue stretch at 32–153 (SDGYCYKVFK…CRSKRYFICK (122 aa)) folds into the C-type lectin domain. A Mannose-binding motif is present at residues 117-119 (EPN). Glutamate 125 and aspartate 141 together coordinate Ca(2+).

Belongs to the true venom lectin family. As to expression, expressed by the venom gland.

The protein localises to the secreted. In terms of biological role, mannose-binding lectin which recognizes specific carbohydrate structures and agglutinates a variety of animal cells by binding to cell-surface glycoproteins and glycolipids. May be a calcium-dependent lectin. The sequence is that of C-type lectin lectoxin-Lio2 from Erythrolamprus poecilogyrus (Water snake).